The following is a 386-amino-acid chain: DNA (cytosine-5)-methyltransferase 3-like (386 aa).

The region spanning glutamate 41 to glutamate 173 is the ADD domain. The GATA-type; atypical zinc-finger motif lies at isoleucine 52–aspartate 82. Residues glutamine 93 to serine 149 form a PHD-type; atypical zinc finger.

Homodimer. Heterotetramer composed of 1 DNMT3A homodimer and 2 DNMT3L subunits (DNMT3L-DNMT3A-DNMT3A-DNMT3L). Interacts with histone H3 (via N-terminus); interaction is strongly inhibited by methylation at lysine 4 (H3K4me). Interacts with EZH2; the interaction is direct. Interacts with SPOCD1. Expressed at low levels in several tissues including testis, ovary, and thymus.

It is found in the nucleus. Functionally, catalytically inactive regulatory factor of DNA methyltransferases that can either promote or inhibit DNA methylation depending on the context. Essential for the function of DNMT3A and DNMT3B: activates DNMT3A and DNMT3B by binding to their catalytic domain. Acts by accelerating the binding of DNA and S-adenosyl-L-methionine (AdoMet) to the methyltransferases and dissociates from the complex after DNA binding to the methyltransferases. Recognizes unmethylated histone H3 lysine 4 (H3K4me0) and induces de novo DNA methylation by recruitment or activation of DNMT3. Plays a key role in embryonic stem cells and germ cells. In germ cells, required for the methylation of imprinted loci together with DNMT3A. In male germ cells, specifically required to methylate retrotransposons, preventing their mobilization. Plays a key role in embryonic stem cells (ESCs) by acting both as an positive and negative regulator of DNA methylation. While it promotes DNA methylation of housekeeping genes together with DNMT3A and DNMT3B, it also acts as an inhibitor of DNA methylation at the promoter of bivalent genes. Interacts with the EZH2 component of the PRC2/EED-EZH2 complex, preventing interaction of DNMT3A and DNMT3B with the PRC2/EED-EZH2 complex, leading to maintain low methylation levels at the promoters of bivalent genes. Promotes differentiation of ESCs into primordial germ cells by inhibiting DNA methylation at the promoter of RHOX5, thereby activating its expression. The sequence is that of DNA (cytosine-5)-methyltransferase 3-like (DNMT3L) from Homo sapiens (Human).